A 220-amino-acid chain; its full sequence is Adenylate kinase (220 aa).

13-18 lines the ATP pocket; the sequence is GAGKGT. An NMP region spans residues 33-62; it reads STGDILRAAVKEGTPLGLEAQSYMNRGALV. Residues threonine 34, arginine 39, 60–62, 88–91, and glutamine 95 contribute to the AMP site; these read ALV and GFPR. The tract at residues 129-170 is LID; the sequence is GRRTCPLCKRIFHVRFNPPPAAPPFCTDHTDCPSELVQRPDD. An ATP-binding site is contributed by arginine 130. Zn(2+) is bound by residues cysteine 133 and cysteine 136. 139–140 is a binding site for ATP; sequence IF. Positions 156 and 160 each coordinate Zn(2+). Residues arginine 167 and arginine 178 each contribute to the AMP site. Residue arginine 206 participates in ATP binding.

The protein belongs to the adenylate kinase family. Monomer.

The protein resides in the cytoplasm. The enzyme catalyses AMP + ATP = 2 ADP. The protein operates within purine metabolism; AMP biosynthesis via salvage pathway; AMP from ADP: step 1/1. Catalyzes the reversible transfer of the terminal phosphate group between ATP and AMP. Plays an important role in cellular energy homeostasis and in adenine nucleotide metabolism. In Gloeobacter violaceus (strain ATCC 29082 / PCC 7421), this protein is Adenylate kinase.